Consider the following 425-residue polypeptide: Histone-binding protein RBBP7 (425 aa).

WD repeat units lie at residues 47-122 (QWLP…KINH), 128-173 (RARY…LRLR), 181-217 (GLSWNSNLSGHLLSASDDHTVCLWDISAGPKEGKVVD), 228-269 (VVED…HSVD), 275-312 (VNCLSFNPYSEFILATGSADKTVALWDLRNLKLKLHSF), 318-369 (EIFQ…LFIH), and 376-403 (ISDFSWNPNEPWVICSVSEDNIMQIWQM).

The protein belongs to the WD repeat RBAP46/RBAP48/MSI1 family. In terms of assembly, binds directly to helix 1 of the histone fold of histone H4, a region that is not accessible when H4 is in chromatin.

The protein localises to the nucleus. Functionally, core histone-binding subunit that may target chromatin remodeling factors, histone acetyltransferases and histone deacetylases to their histone substrates in a manner that is regulated by nucleosomal DNA. Component of several complexes which regulate chromatin metabolism. In Xenopus tropicalis (Western clawed frog), this protein is Histone-binding protein RBBP7 (rbbp7).